The primary structure comprises 430 residues: MHPSTPISSLFSFTSPAVKRLLGWKQGDEEEKWAEKAVDSLVKKLKKKKGAMDELERALSCPGQPSKCVTIPRSLDGRLQVSHRKGLPHVIYCRVWRWPDLQSHHELKPLECCEFPFGSKQKEVCINPYHYRRVETPVLPPVLVPRHSEYNPQLSLLAKFRSASLHSEPLMPHNATYPDSFQQSLCPAPPSSPGHVFPQSPCPTSYPHSPGSPSESDSPYQHSDFRPVCYEEPQHWCSVAYYELNNRVGETFQASSRSVLIDGFTDPSNNRNRFCLGLLSNVNRNSTIENTRRHIGKGVHLYYVGGEVYAECVSDSSIFVQSRNCNYQHGFHPATVCKIPSGCSLKVFNNQLFAQLLAQSVHHGFEVVYELTKMCTIRMSFVKGWGAEYHRQDVTSTPCWIEIHLHGPLQWLDKVLTQMGSPHNPISSVS.

One can recognise an MH1 domain in the interval 16-140 (PAVKRLLGWK…YRRVETPVLP (125 aa)). Residues C68, C113, C125, and H130 each contribute to the Zn(2+) site. The disordered stretch occupies residues 186–222 (CPAPPSSPGHVFPQSPCPTSYPHSPGSPSESDSPYQH). A compositionally biased stretch (polar residues) spans 202–221 (CPTSYPHSPGSPSESDSPYQ). Residues 236 to 430 (WCSVAYYELN…SPHNPISSVS (195 aa)) enclose the MH2 domain.

This sequence belongs to the dwarfin/SMAD family. As to quaternary structure, interaction with the co-SMAD SMAD4. Interacts with PEBP2-alpha subunit. Interacts with RANBP3L. Phosphorylated on serine by BMP (bone morphogenetic proteins) type 1 receptor kinase and activin type I receptor-like kinases (ALK-2, ALK-3 and ALK-6).

The protein resides in the cytoplasm. It is found in the nucleus. Functionally, transcriptional modulator activated by BMP (bone morphogenetic proteins) type 1 receptor kinase. SMAD9 is a receptor-regulated SMAD (R-SMAD). Has been shown to be activated by activin type I receptor-like kinases (ALK-2, ALK-3, ALK-6) which stimulate heteromerization between SMAD9 and SMAD4. May play a role in osteoblast differentiation and maturation. The sequence is that of Mothers against decapentaplegic homolog 9 (Smad9) from Mus musculus (Mouse).